Consider the following 676-residue polypeptide: DNA-directed RNA polymerase subunit beta' (676 aa).

The Zn(2+) site is built by Cys69, Cys71, Cys87, and Cys90. Positions 485, 487, and 489 each coordinate Mg(2+).

The protein belongs to the RNA polymerase beta' chain family. RpoC1 subfamily. In plastids the minimal PEP RNA polymerase catalytic core is composed of four subunits: alpha, beta, beta', and beta''. When a (nuclear-encoded) sigma factor is associated with the core the holoenzyme is formed, which can initiate transcription. Mg(2+) serves as cofactor. Requires Zn(2+) as cofactor.

It localises to the plastid. It is found in the chloroplast. It catalyses the reaction RNA(n) + a ribonucleoside 5'-triphosphate = RNA(n+1) + diphosphate. DNA-dependent RNA polymerase catalyzes the transcription of DNA into RNA using the four ribonucleoside triphosphates as substrates. The chain is DNA-directed RNA polymerase subunit beta' from Fagopyrum esculentum subsp. ancestrale (Wild buckwheat).